Reading from the N-terminus, the 308-residue chain is tRNA dimethylallyltransferase (308 aa).

Gly-11–Thr-18 provides a ligand contact to ATP. A substrate-binding site is contributed by Thr-13–Thr-18. The interval Asp-36 to Gln-39 is interaction with substrate tRNA.

This sequence belongs to the IPP transferase family. Monomer. Requires Mg(2+) as cofactor.

It carries out the reaction adenosine(37) in tRNA + dimethylallyl diphosphate = N(6)-dimethylallyladenosine(37) in tRNA + diphosphate. Functionally, catalyzes the transfer of a dimethylallyl group onto the adenine at position 37 in tRNAs that read codons beginning with uridine, leading to the formation of N6-(dimethylallyl)adenosine (i(6)A). The chain is tRNA dimethylallyltransferase from Lactobacillus gasseri (strain ATCC 33323 / DSM 20243 / BCRC 14619 / CIP 102991 / JCM 1131 / KCTC 3163 / NCIMB 11718 / NCTC 13722 / AM63).